Here is a 247-residue protein sequence, read N- to C-terminus: tRNA pseudouridine synthase A (247 aa).

The Nucleophile role is filled by D52. Y113 contacts substrate.

This sequence belongs to the tRNA pseudouridine synthase TruA family. As to quaternary structure, homodimer.

The catalysed reaction is uridine(38/39/40) in tRNA = pseudouridine(38/39/40) in tRNA. In terms of biological role, formation of pseudouridine at positions 38, 39 and 40 in the anticodon stem and loop of transfer RNAs. This Bartonella henselae (strain ATCC 49882 / DSM 28221 / CCUG 30454 / Houston 1) (Rochalimaea henselae) protein is tRNA pseudouridine synthase A.